We begin with the raw amino-acid sequence, 501 residues long: HMG-box protein STE11 (501 aa).

The segment covering 142–153 (PVNMVGSLSGSP) has biased composition (polar residues). Disordered regions lie at residues 142-205 (PVNM…KRPL) and 246-293 (YAEM…SLEQ). The span at 192–204 (SRSGSSSSGIKRP) shows a compositional bias: low complexity. A DNA-binding region (HMG box) is located at residues 201 to 265 (IKRPLNSFML…RHAKEYPDYK (65 aa)). The segment covering 246–263 (YAEMAQRERERHAKEYPD) has biased composition (basic and acidic residues).

Post-translationally, phosphorylated by MAPK2.

The protein localises to the nucleus. In Pneumocystis carinii, this protein is HMG-box protein STE11.